The primary structure comprises 84 residues: MVLQNDIDLLNPPAELEKRKHKLKRLVQSPNSFFMDVKCQGCFNITTVFSHSQTVVMCGNCQTLLCTPTGGKAKLTEGCSFRKK.

Residues 39–61 (CQGCFNITTVFSHSQTVVMCGNC) form a C4-type zinc finger.

The protein belongs to the eukaryotic ribosomal protein eS27 family. In terms of assembly, (Microbial infection) May interact with Tomato yellow leaf curl virus (TYLCV) and papaya leaf curl China virus (PaLcuCNV) C2 proteins. This interaction prevents activation of Jasmonate signaling, thereby facilitating viral uptake by insects vectors. The cofactor is Zn(2+).

This is Small ribosomal subunit protein eS27z (RPS27A) from Arabidopsis thaliana (Mouse-ear cress).